Reading from the N-terminus, the 43-residue chain is Large ribosomal subunit protein uL5 (43 aa).

Belongs to the universal ribosomal protein uL5 family. In terms of assembly, part of the 50S ribosomal subunit; part of the 5S rRNA/L5/L18/L25 subcomplex. Contacts the 5S rRNA and the P site tRNA. Forms a bridge to the 30S subunit in the 70S ribosome.

Functionally, this is one of the proteins that bind and probably mediate the attachment of the 5S RNA into the large ribosomal subunit, where it forms part of the central protuberance. In the 70S ribosome it contacts protein S13 of the 30S subunit (bridge B1b), connecting the 2 subunits; this bridge is implicated in subunit movement. Contacts the P site tRNA; the 5S rRNA and some of its associated proteins might help stabilize positioning of ribosome-bound tRNAs. This Serratia marcescens protein is Large ribosomal subunit protein uL5 (rplE).